Consider the following 243-residue polypeptide: PHO85 cyclin-like protein psl1 (243 aa).

Residues 211–224 show a composition bias toward polar residues; it reads ESPISHTPQQNQQD. The interval 211–231 is disordered; sequence ESPISHTPQQNQQDEQPRRPI.

Belongs to the cyclin family. PHO80 subfamily. As to quaternary structure, forms a cyclin-CDK complex with pef1.

It localises to the cytoplasm. The protein localises to the nucleus. Cyclin partner of the cyclin-dependent kinase (CDK) pef1 (PHO85 homolog). The chain is PHO85 cyclin-like protein psl1 (psl1) from Schizosaccharomyces pombe (strain 972 / ATCC 24843) (Fission yeast).